The sequence spans 257 residues: MDRIIEKLDHGWWVVSHEQKLWLPKGELPYGEAANFDLVGQRALQIGEWQGEPVWLIQQQRRHDMGSVRQVIDLDVGLFLLAGRGVQLAEFYRSHKYCGYCGHEMYPSKTEWAMLCSHCRERYYPQIAPCIIVAIRRDDSILLAQHTRHRNGVHTVLAGFVEVGETLEQAVAREVMEESGIKVKNLRYVTSQPWPFPQSLMTAFMADYDSGDIVIDPKELLEANWYRYDNLPLLPVPGTVARRLIEDTVALCRAEYE.

2 residues coordinate substrate: Lys25 and Arg69. Zn(2+) contacts are provided by Cys98 and Cys101. Glu111 serves as a coordination point for substrate. 2 residues coordinate Zn(2+): Cys116 and Cys119. Substrate is bound at residue Tyr124. The 124-residue stretch at 125 to 248 (PQIAPCIIVA…TVARRLIEDT (124 aa)) folds into the Nudix hydrolase domain. Positions 158, 174, and 178 each coordinate a divalent metal cation. A Nudix box motif is present at residues 159–180 (GFVEVGETLEQAVAREVMEESG). 192–199 (QPWPFPQS) contacts substrate. Glu219 contacts a divalent metal cation. Ala241 lines the substrate pocket.

The protein belongs to the Nudix hydrolase family. NudC subfamily. In terms of assembly, homodimer. Mg(2+) is required as a cofactor. Mn(2+) serves as cofactor. Requires Zn(2+) as cofactor.

It carries out the reaction a 5'-end NAD(+)-phospho-ribonucleoside in mRNA + H2O = a 5'-end phospho-adenosine-phospho-ribonucleoside in mRNA + beta-nicotinamide D-ribonucleotide + 2 H(+). It catalyses the reaction NAD(+) + H2O = beta-nicotinamide D-ribonucleotide + AMP + 2 H(+). The enzyme catalyses NADH + H2O = reduced beta-nicotinamide D-ribonucleotide + AMP + 2 H(+). Its function is as follows. mRNA decapping enzyme that specifically removes the nicotinamide adenine dinucleotide (NAD) cap from a subset of mRNAs by hydrolyzing the diphosphate linkage to produce nicotinamide mononucleotide (NMN) and 5' monophosphate mRNA. The NAD-cap is present at the 5'-end of some mRNAs and stabilizes RNA against 5'-processing. Has preference for mRNAs with a 5'-end purine. Catalyzes the hydrolysis of a broad range of dinucleotide pyrophosphates. In Shigella dysenteriae serotype 1 (strain Sd197), this protein is NAD-capped RNA hydrolase NudC.